The chain runs to 119 residues: MKASFCVIASCLVVFALKGTAEDTGTEDDFDYGNTGCPFPVLGNYKSNMTKPVGCKNKCGSGYEVLNDTTPCYVIDQKVFNNMVPLRQYSKCPLGFCENGECKPNDQAEDCYKGREEQK.

Residues 1 to 21 (MKASFCVIASCLVVFALKGTA) form the signal peptide. 4 disulfide bridges follow: Cys-37–Cys-59, Cys-55–Cys-97, Cys-72–Cys-102, and Cys-92–Cys-111. Asn-48 and Asn-67 each carry an N-linked (GlcNAc...) asparagine glycan.

It is found in the secreted. Salivary chemokine-binding protein which binds to host chemokines CCL2, CCL3 and CCL8. This is Evasin P983 from Amblyomma cajennense (Cayenne tick).